A 475-amino-acid chain; its full sequence is Glucose-6-phosphate 1-dehydrogenase gcd1 (475 aa).

Residues R42 and K146 each contribute to the NADP(+) site. Residues K146, E214, and D233 each contribute to the D-glucose 6-phosphate site. H238 serves as the catalytic Proton acceptor. Position 332 (K332) interacts with D-glucose 6-phosphate. Residues R342 and R365 each contribute to the NADP(+) site.

The protein belongs to the glucose-6-phosphate dehydrogenase family.

Its subcellular location is the cytoplasm. The catalysed reaction is D-glucose 6-phosphate + NADP(+) = 6-phospho-D-glucono-1,5-lactone + NADPH + H(+). It functions in the pathway carbohydrate degradation; pentose phosphate pathway; D-ribulose 5-phosphate from D-glucose 6-phosphate (oxidative stage): step 1/3. Functionally, catalyzes the rate-limiting step of the oxidative pentose-phosphate pathway, which represents a route for the dissimilation of carbohydrates besides glycolysis. The main function of this enzyme is to provide reducing power (NADPH) and pentose phosphates for fatty acid and nucleic acid synthesis. The sequence is that of Glucose-6-phosphate 1-dehydrogenase gcd1 from Schizosaccharomyces pombe (strain 972 / ATCC 24843) (Fission yeast).